A 598-amino-acid chain; its full sequence is Aspartate--tRNA(Asp/Asn) ligase (598 aa).

Position 177 (Glu-177) interacts with L-aspartate. The segment at 201–204 (QLFK) is aspartate. An L-aspartate-binding site is contributed by Arg-223. Residues 223–225 (RDE) and Gln-232 contribute to the ATP site. His-456 contributes to the L-aspartate binding site. Glu-493 provides a ligand contact to ATP. Arg-500 lines the L-aspartate pocket. 545–548 (GLDR) contributes to the ATP binding site.

It belongs to the class-II aminoacyl-tRNA synthetase family. Type 1 subfamily. Homodimer.

It is found in the cytoplasm. The catalysed reaction is tRNA(Asx) + L-aspartate + ATP = L-aspartyl-tRNA(Asx) + AMP + diphosphate. In terms of biological role, aspartyl-tRNA synthetase with relaxed tRNA specificity since it is able to aspartylate not only its cognate tRNA(Asp) but also tRNA(Asn). Reaction proceeds in two steps: L-aspartate is first activated by ATP to form Asp-AMP and then transferred to the acceptor end of tRNA(Asp/Asn). The polypeptide is Aspartate--tRNA(Asp/Asn) ligase (Prochlorococcus marinus (strain MIT 9215)).